Reading from the N-terminus, the 222-residue chain is MSKGDRPGLLLPFENKRIIRIRNSVYTETETPQRVYGEEITKINNRTYREWDPRRSKPAAAILNGLRRFPIRENDSVLYLGASTGTTISHISDICPAGTIYGVEVSYEPFSKLLDLAKKRNNLYPILEDANSPEKYSFFIEHVDVMYQDISQRNQIQIFKNNVNTFNPKRGFLVLKIRSVKSTEDSRSILNTAMDQLSVYHLKEVINLKPYDTDHYLITLDT.

Residues 86–87 (TT), 104–105 (EV), 129–130 (DA), and 149–152 (DISQ) each bind S-adenosyl-L-methionine.

It belongs to the methyltransferase superfamily. Fibrillarin family. Interacts with nop5. Component of box C/D small ribonucleoprotein (sRNP) particles that contain rpl7ae, FlpA and nop5, plus a guide RNA.

Functionally, involved in pre-rRNA and tRNA processing. Utilizes the methyl donor S-adenosyl-L-methionine to catalyze the site-specific 2'-hydroxyl methylation of ribose moieties in rRNA and tRNA. Site specificity is provided by a guide RNA that base pairs with the substrate. Methylation occurs at a characteristic distance from the sequence involved in base pairing with the guide RNA. The protein is Fibrillarin-like rRNA/tRNA 2'-O-methyltransferase of Thermoplasma volcanium (strain ATCC 51530 / DSM 4299 / JCM 9571 / NBRC 15438 / GSS1).